The chain runs to 180 residues: Stathmin-3 (180 aa).

2 S-palmitoyl cysteine lipidation sites follow: Cys-22 and Cys-24. An SLD domain is found at 38–180; that stretch reads GDMEVKQLDK…NKEQREEMSG (143 aa). A phosphoserine mark is found at Ser-50, Ser-60, Ser-65, Ser-68, Ser-72, Ser-73, and Ser-81. The tract at residues 59–82 is disordered; that stretch reads KSPSDLSPESPMLSSPPKKKDTSL. A compositionally biased stretch (low complexity) spans 60-74; it reads SPSDLSPESPMLSSP. Residues 75 to 179 adopt a coiled-coil conformation; the sequence is PKKKDTSLEE…RNKEQREEMS (105 aa).

It belongs to the stathmin family. As to quaternary structure, interacts with STAT3. Interacts with CLU (secreted form); this interaction may act as an important modulator during neuronal differentiation. In terms of processing, N-terminal palmitoylation promotes specific anchoring to the cytosolic leaflet of Golgi membranes and subsequent vesicular trafficking along dendrites and axons. Neuronal Stathmins are substrates for palmitoyltransferases ZDHHC3, ZDHHC7 and ZDHHC15. As to expression, neuron specific.

It is found in the golgi apparatus. The protein localises to the cell projection. It localises to the growth cone. Its subcellular location is the axon. The protein resides in the cytoplasm. It is found in the cytosol. Its function is as follows. Exhibits microtubule-destabilizing activity, which is antagonized by STAT3. In Homo sapiens (Human), this protein is Stathmin-3 (STMN3).